The primary structure comprises 73 residues: MKKNIHPQYNVISASCSCGNVIHVRSTLKHNINLDVCDACHPFYTGTQRIIDTRGRVNLFNKRFNKNNKNPFI.

4 residues coordinate Zn(2+): cysteine 16, cysteine 18, cysteine 37, and cysteine 40.

This sequence belongs to the bacterial ribosomal protein bL31 family. Type A subfamily. In terms of assembly, part of the 50S ribosomal subunit. The cofactor is Zn(2+).

Its function is as follows. Binds the 23S rRNA. This chain is Large ribosomal subunit protein bL31, found in Blochmanniella floridana.